A 552-amino-acid chain; its full sequence is MATSLTLIATPCTAPRSSSSFALAPRLPPRCSNATAARRRAVRATTLQSDQEPAGSGDSGATTTKLSASTSVRQERWEGDLPIEGCLPPWLNGTYIRNGPGMWDVGEHAFHHLFDGYATLVRVSFRGGGGARATGAHRQIESEAYRAAVARGRPVLREFSHCPAPAKSLLHRFGDLVGLVTGAALTDNPNSAVLPLGDGRVMCLTETTKSSVLIDPDTLETVGRFRYTDRLGGMVQSAHPIVTDTEFLTLLPDLVRPGHLVVRMEAGSNERKVIGRMDCRGGPSPGWLHSFAVTEKYAVVPEMPLRYSSASLLASELAPFYAFDWVPASGSYMHVMCKSTGKTVASVEVPPFMAIHFINAYEEEGDEAAVVVDCCEHYGDPAIIETLVLSRLRLLRGKDVLPNARVGRFRIPLDGSPFGELETALDPEEHGRGMDMCSINPARLGRKYQYAYACGARRPCNFPNTLTKIDLVEKKAKSWHEEGSVPSEPFFVARPGATDEDDGVVISIVSSDDGEGYALVLDATTFEEIARVRFPYGLPYGFHGCWIPATEE.

A chloroplast-targeting transit peptide spans M1–R43. Residues S32–R73 form a disordered region. Residues S59–V72 are compositionally biased toward polar residues. Fe cation-binding residues include H239, H289, H356, and H543.

This sequence belongs to the carotenoid oxygenase family. Fe(2+) serves as cofactor. Highly expressed in panicles, inflorescences and parenchyma cells of the root stele, and at lower levels in shoot apex, leaf buds and xylem parenchyma cells of the stem.

Its subcellular location is the plastid. The protein localises to the chloroplast. In terms of biological role, may be involved in strigolactones biosynthesis. This Oryza sativa subsp. japonica (Rice) protein is Carotenoid cleavage dioxygenase 8 homolog A, chloroplastic (CCD8A).